A 538-amino-acid polypeptide reads, in one-letter code: Succinyl-CoA:acetate CoA-transferase (538 aa).

305 to 309 (GVGSV) is a CoA binding site. Glu330 functions as the 5-glutamyl coenzyme A thioester intermediate in the catalytic mechanism. Asn420 and Gly424 together coordinate CoA.

It belongs to the acetyl-CoA hydrolase/transferase family.

The catalysed reaction is succinyl-CoA + acetate = succinate + acetyl-CoA. Functionally, forms succinyl-CoA from succinate and acetyl-CoA. This Clostridium kluyveri (strain ATCC 8527 / DSM 555 / NBRC 12016 / NCIMB 10680 / K1) protein is Succinyl-CoA:acetate CoA-transferase.